Reading from the N-terminus, the 76-residue chain is Acyl carrier protein (76 aa).

Residues 1-74 (MEERIKEIIA…DVINYIKEKK (74 aa)) form the Carrier domain. An O-(pantetheine 4'-phosphoryl)serine modification is found at Ser-34.

Belongs to the acyl carrier protein (ACP) family. 4'-phosphopantetheine is transferred from CoA to a specific serine of apo-ACP by AcpS. This modification is essential for activity because fatty acids are bound in thioester linkage to the sulfhydryl of the prosthetic group.

The protein localises to the cytoplasm. It participates in lipid metabolism; fatty acid biosynthesis. In terms of biological role, carrier of the growing fatty acid chain in fatty acid biosynthesis. This Persephonella marina (strain DSM 14350 / EX-H1) protein is Acyl carrier protein.